Consider the following 872-residue polypeptide: Alanine--tRNA ligase (872 aa).

Zn(2+) contacts are provided by His567, His571, Cys669, and His673.

It belongs to the class-II aminoacyl-tRNA synthetase family. Zn(2+) serves as cofactor.

It localises to the cytoplasm. It carries out the reaction tRNA(Ala) + L-alanine + ATP = L-alanyl-tRNA(Ala) + AMP + diphosphate. In terms of biological role, catalyzes the attachment of alanine to tRNA(Ala) in a two-step reaction: alanine is first activated by ATP to form Ala-AMP and then transferred to the acceptor end of tRNA(Ala). Also edits incorrectly charged Ser-tRNA(Ala) and Gly-tRNA(Ala) via its editing domain. The polypeptide is Alanine--tRNA ligase (Streptococcus pneumoniae (strain Hungary19A-6)).